A 335-amino-acid polypeptide reads, in one-letter code: Pyridoxal 5'-phosphate synthase subunit PdxS (335 aa).

Aspartate 30 serves as a coordination point for D-ribose 5-phosphate. Residue lysine 87 is the Schiff-base intermediate with D-ribose 5-phosphate of the active site. D-ribose 5-phosphate is bound at residue glycine 159. Residue arginine 171 coordinates D-glyceraldehyde 3-phosphate. D-ribose 5-phosphate contacts are provided by residues glycine 257 and 278–279; that span reads GS.

This sequence belongs to the PdxS/SNZ family. Homohexamer. In the presence of PdxT, forms a dodecamer of heterodimers.

It carries out the reaction aldehydo-D-ribose 5-phosphate + D-glyceraldehyde 3-phosphate + L-glutamine = pyridoxal 5'-phosphate + L-glutamate + phosphate + 3 H2O + H(+). It functions in the pathway cofactor biosynthesis; pyridoxal 5'-phosphate biosynthesis. Functionally, catalyzes the formation of pyridoxal 5'-phosphate from ribose 5-phosphate (RBP), glyceraldehyde 3-phosphate (G3P) and ammonia. The ammonia is provided by the PdxT subunit. Can also use ribulose 5-phosphate and dihydroxyacetone phosphate as substrates, resulting from enzyme-catalyzed isomerization of RBP and G3P, respectively. This Pyrococcus horikoshii (strain ATCC 700860 / DSM 12428 / JCM 9974 / NBRC 100139 / OT-3) protein is Pyridoxal 5'-phosphate synthase subunit PdxS.